Reading from the N-terminus, the 872-residue chain is Metabotropic glutamate receptor 2 (872 aa).

The N-terminal stretch at 1-18 (MESLLGFLALLLLWGAVA) is a signal peptide. Residues 19-567 (EGPAKKVLTL…QEYIRWGDAW (549 aa)) lie on the Extracellular side of the membrane. The cysteines at positions 50 and 92 are disulfide-linked. L-glutamate-binding residues include Arg-57, Arg-61, Ser-145, Ala-166, and Thr-168. N-linked (GlcNAc...) asparagine glycosylation is found at Asn-203 and Asn-286. Cystine bridges form between Cys-234-Cys-518, Cys-355-Cys-362, Cys-400-Cys-407, Cys-500-Cys-519, Cys-504-Cys-522, Cys-525-Cys-537, and Cys-540-Cys-553. Position 295 (Asp-295) interacts with L-glutamate. N-linked (GlcNAc...) asparagine glycosylation is present at Asn-338. Residue Lys-377 participates in L-glutamate binding. Asn-402 carries an N-linked (GlcNAc...) asparagine glycan. Asn-547 carries an N-linked (GlcNAc...) asparagine glycan. Residues 568–590 (AVGPVTIACLGALATLFVLGVFV) form a helical membrane-spanning segment. At 591-604 (RHNATPVVKASGRE) the chain is on the cytoplasmic side. A helical transmembrane segment spans residues 605-625 (LCYILLGGVFLCYCMTFVFIA). Topologically, residues 626 to 636 (KPSTAVCTLRR) are extracellular. An intrachain disulfide couples Cys-632 to Cys-721. A helical membrane pass occupies residues 637–655 (LGLGTAFSVCYSALLTKTN). At 656-679 (RIARIFGGAREGAQRPRFISPASQ) the chain is on the cytoplasmic side. Positions 677-685 (ASQVAICLA) are important for interaction with HTR2A. A helical transmembrane segment spans residues 680–700 (VAICLALISGQLLIVAAWLVV). Residues 701–725 (EAPGTGKETAPERREVVTLRCNHRD) lie on the Extracellular side of the membrane. A helical transmembrane segment spans residues 726–747 (ASMLGSLAYNVLLIALCTLYAF). The Cytoplasmic portion of the chain corresponds to 748–760 (KTRKCPENFNEAK). The chain crosses the membrane as a helical span at residues 761–783 (FIGFTMYTTCIIWLAFLPIFYVT). Over 784 to 793 (SSDYRVQTTT) the chain is Extracellular. The chain crosses the membrane as a helical span at residues 794–819 (MCVSVSLSGSVVLGCLFAPKLHIILF). Residues 820–872 (QPQKNVVSHRAPTSRFGSAAPRASANLGQGSGSQFVPTVCNGREVVDSTTSSL) are Cytoplasmic-facing.

Belongs to the G-protein coupled receptor 3 family. Forms heterodimers with GRM3 or GRM4. Interacts with GNAI1. Interacts with TAMALIN. Interacts with HTR2A. In terms of tissue distribution, is widely distributed in the CNS and prominent expression is seen in Golgi cells of the cerebellum and some particular neuronal cells in other brain regions.

Its subcellular location is the cell membrane. It is found in the synapse. The protein resides in the cell projection. The protein localises to the dendrite. Functionally, dimeric G protein-coupled receptor which is activated by the excitatory neurotransmitter L-glutamate. Plays critical roles in modulating synaptic transmission and neuronal excitability. Upon activation by glutamate, inhibits presynaptic calcium channels, reducing further glutamate release and dampening excitatory signaling. Mechanistically, ligand binding causes a conformation change that triggers signaling via guanine nucleotide-binding proteins (G proteins) and modulates the activity of down-stream effectors, such as adenylate cyclase. May mediate suppression of neurotransmission or may be involved in synaptogenesis or synaptic stabilization. In Rattus norvegicus (Rat), this protein is Metabotropic glutamate receptor 2 (Grm2).